The chain runs to 1200 residues: Hyalin (1200 aa).

15 HYR domains span residues 1–39, 40–123, 124–207, 208–292, 293–376, 377–460, 461–544, 546–629, 630–713, 714–797, 798–881, 882–966, 967–1050, 1051–1133, and 1134–1200; these read SSHN…TVTA, TDTT…NVIE, VDTT…NVIE, VDTT…NVVE, VDTT…TVEE, VDTT…TVIA, VDTT…TISA, VDTT…VINA, VDTT…TIGT, VDTM…TVFA, VDTT…TVTA, QDTT…TVNT, and QDTT…FFSD.

In terms of assembly, homooligomer in presence of calcium. Post-translationally, glycosylated.

It is found in the secreted. Its subcellular location is the extracellular space. It localises to the extracellular matrix. Functionally, major constituent of the hyaline layer. The hyaline layer of echinoderm embryos is an extraembryonic matrix that functions as a substrate for cell adhesion through early development. The sequence is that of Hyalin from Strongylocentrotus purpuratus (Purple sea urchin).